The following is a 562-amino-acid chain: NAD-dependent malic enzyme (562 aa).

Residue Tyr-101 is the Proton donor of the active site. Arg-154 provides a ligand contact to NAD(+). Lys-172 acts as the Proton acceptor in catalysis. Positions 243, 244, and 267 each coordinate a divalent metal cation. Residues Asp-267 and Asn-415 each coordinate NAD(+).

The protein belongs to the malic enzymes family. As to quaternary structure, homotetramer. Mg(2+) serves as cofactor. Mn(2+) is required as a cofactor.

The enzyme catalyses (S)-malate + NAD(+) = pyruvate + CO2 + NADH. It carries out the reaction oxaloacetate + H(+) = pyruvate + CO2. This chain is NAD-dependent malic enzyme, found in Shewanella woodyi (strain ATCC 51908 / MS32).